Reading from the N-terminus, the 985-residue chain is Na(+)/H(+) antiporter (985 aa).

The Cytoplasmic segment spans residues 1–12 (MAIWEQLEVSKA). A helical transmembrane segment spans residues 13 to 33 (HVAYACVGVFSSIFSLVSLYV). At 34–36 (KEK) the chain is on the extracellular side. The helical transmembrane segment at 37 to 57 (LYIGESTVAGIFGLIVGPVCL) threads the bilayer. The Cytoplasmic segment spans residues 58–70 (NWFNPLKWGNSDS). Residues 71-91 (ITLEITRIVLCLQIFAVAVEL) form a helical membrane-spanning segment. Residues 92 to 105 (PRKYMLKHWVSVTM) are Extracellular-facing. Residues 106–126 (LLLPVMTAGWLIIGLFVWILI) form a helical membrane-spanning segment. Residues 127 to 128 (PG) are Cytoplasmic-facing. The helical transmembrane segment at 129–149 (LNFSASLLISACITATDPILA) threads the bilayer. Residues 150 to 176 (QSVVSGKFAQRVPGHLRNLLSAESGCN) are Extracellular-facing. Residues 177–197 (DGMAFPFLFLSMNLILHPGNG) form a helical membrane-spanning segment. Topologically, residues 198–203 (REIVKD) are cytoplasmic. Residues 204-224 (WICVTILYECLFGCLLGCFIG) traverse the membrane as a helical segment. Residues 225–244 (YVGRITIRFAEKKNIIDRES) are Extracellular-facing. A helical transmembrane segment spans residues 245-265 (FLAFYVVLAFMCAGFGSILGV). Over 266 to 294 (DDLLVSFAAGATFAWDGWFSQKTQESNVS) the chain is Cytoplasmic. Residues 295–315 (TVIDLLLNYAYFIYFGAIIPW) form a helical membrane-spanning segment. Residues 316–319 (SQFN) are Extracellular-facing. The chain crosses the membrane as a helical span at residues 320–340 (NGEIGTNVWRLIILSIVVIFL). Topologically, residues 341-361 (RRIPAVMILRPLIPDIKSWRE) are cytoplasmic. The helical transmembrane segment at 362–382 (ALFVGHFGPIGVGAIFAAILA) threads the bilayer. Residues 383–410 (RGELESTFSDEPTPLNVVPSKEESKHWQ) are Extracellular-facing. A helical transmembrane segment spans residues 411 to 431 (LIACIWPITCFFIVTSIIVHG). The Cytoplasmic portion of the chain corresponds to 432–985 (SSVAIITLGR…ALSKTLGLNK (554 aa)). Disordered regions lie at residues 489-701 (MTLS…KPGT) and 726-760 (DRNE…GGRL). Polar residues predominate over residues 517 to 526 (NNDQIGSVAT). Basic residues predominate over residues 538-558 (PRRRKLSRKEKRLNRRQKLRN). Composition is skewed to basic and acidic residues over residues 559 to 572 (KGRE…KNEM) and 580 to 593 (DLGR…KEAR). Ser568 is modified (phosphoserine). Residues 637–646 (SFESSERSSS) show a composition bias toward low complexity. A compositionally biased stretch (acidic residues) spans 661–675 (EETESEIESEDEMEN). The segment covering 676-698 (ESERSMASSEERRIRKMKEEEMK) has biased composition (basic and acidic residues). The span at 743 to 756 (SSLTTTMTNLSSSS) shows a compositional bias: low complexity. A Phosphothreonine modification is found at Thr765. A phosphoserine mark is found at Ser768 and Ser774. Residues 812–985 (INPHKSDDDK…ALSKTLGLNK (174 aa)) are disordered. Basic and acidic residues-rich tracts occupy residues 815-828 (HKSD…RPRN) and 854-863 (DEEKAIEGPS). Acidic residues predominate over residues 887 to 920 (LDLEDEPSSEEDLGDSYNMDDSEDYDDNAYESET). Residues 970-979 (SAAVKSALSK) are compositionally biased toward low complexity.

It belongs to the fungal Na(+)/H(+) exchanger family.

It localises to the cell membrane. Sodium export from cell, takes up external protons in exchange for internal sodium ions. Also capable of exporting potassium ions. The chain is Na(+)/H(+) antiporter (NHA1) from Saccharomyces cerevisiae (strain ATCC 204508 / S288c) (Baker's yeast).